Consider the following 296-residue polypeptide: Farnesyl diphosphate synthase (296 aa).

The isopentenyl diphosphate site is built by lysine 46, arginine 49, and histidine 78. Residues aspartate 85 and aspartate 91 each contribute to the Mg(2+) site. Residue arginine 96 participates in (2E)-geranyl diphosphate binding. Arginine 97 serves as a coordination point for isopentenyl diphosphate. Residues lysine 182, threonine 183, glutamine 220, and lysine 237 each coordinate (2E)-geranyl diphosphate.

The protein belongs to the FPP/GGPP synthase family. It depends on Mg(2+) as a cofactor.

The protein resides in the cytoplasm. The enzyme catalyses isopentenyl diphosphate + (2E)-geranyl diphosphate = (2E,6E)-farnesyl diphosphate + diphosphate. The polypeptide is Farnesyl diphosphate synthase (ispA) (Bacillus subtilis (strain 168)).